We begin with the raw amino-acid sequence, 418 residues long: Histidine--tRNA ligase (418 aa).

This sequence belongs to the class-II aminoacyl-tRNA synthetase family.

It is found in the cytoplasm. It carries out the reaction tRNA(His) + L-histidine + ATP = L-histidyl-tRNA(His) + AMP + diphosphate + H(+). The sequence is that of Histidine--tRNA ligase from Methanococcus maripaludis (strain C7 / ATCC BAA-1331).